The primary structure comprises 143 residues: Flagellar assembly factor FliW (143 aa).

This sequence belongs to the FliW family. As to quaternary structure, interacts with translational regulator CsrA and flagellin(s).

The protein resides in the cytoplasm. In terms of biological role, acts as an anti-CsrA protein, binds CsrA and prevents it from repressing translation of its target genes, one of which is flagellin. Binds to flagellin and participates in the assembly of the flagellum. The polypeptide is Flagellar assembly factor FliW (Clostridium botulinum (strain 657 / Type Ba4)).